A 103-amino-acid chain; its full sequence is Large ribosomal subunit protein bL21 (103 aa).

It belongs to the bacterial ribosomal protein bL21 family. Part of the 50S ribosomal subunit. Contacts protein L20.

Its function is as follows. This protein binds to 23S rRNA in the presence of protein L20. The sequence is that of Large ribosomal subunit protein bL21 from Bordetella petrii (strain ATCC BAA-461 / DSM 12804 / CCUG 43448).